We begin with the raw amino-acid sequence, 444 residues long: NADH-quinone oxidoreductase subunit F (444 aa).

61–70 contributes to the NAD(+) binding site; the sequence is GRGGAGFSTG. Position 176-223 (176-223) interacts with FMN; that stretch reads GAGRYICGEETALINSLEGRRANPRSKPPFPAVFGLWGKPTCVNNVET. [4Fe-4S] cluster-binding residues include Cys353, Cys356, Cys359, and Cys400.

The protein belongs to the complex I 51 kDa subunit family. In terms of assembly, composed of 13 different subunits. Subunits NuoCD, E, F, and G constitute the peripheral sector of the complex. FMN serves as cofactor. The cofactor is [4Fe-4S] cluster.

The catalysed reaction is a quinone + NADH + 5 H(+)(in) = a quinol + NAD(+) + 4 H(+)(out). Functionally, NDH-1 shuttles electrons from NADH, via FMN and iron-sulfur (Fe-S) centers, to quinones in the respiratory chain. Couples the redox reaction to proton translocation (for every two electrons transferred, four hydrogen ions are translocated across the cytoplasmic membrane), and thus conserves the redox energy in a proton gradient. The protein is NADH-quinone oxidoreductase subunit F (nuoF) of Buchnera aphidicola subsp. Acyrthosiphon pisum (strain APS) (Acyrthosiphon pisum symbiotic bacterium).